The following is a 107-amino-acid chain: Ferredoxin (107 aa).

Positions 1–8 are excised as a propeptide; it reads MVSGVSRN. Residues cysteine 45, cysteine 51, and cysteine 54 each contribute to the [2Fe-2S] cluster site.

[2Fe-2S] cluster serves as cofactor.

The protein resides in the hydrogenosome. Functionally, ferredoxins are iron-sulfur proteins that transfer electrons in a wide variety of metabolic reactions. In Psalteriomonas lanterna (Amoeboflagellate), this protein is Ferredoxin.